Here is a 428-residue protein sequence, read N- to C-terminus: 3-phosphoshikimate 1-carboxyvinyltransferase (428 aa).

3-phosphoshikimate contacts are provided by Lys-22, Ser-23, and Arg-27. Residue Lys-22 coordinates phosphoenolpyruvate. Phosphoenolpyruvate-binding residues include Gly-96 and Arg-124. Residues Ser-170, Ser-171, Gln-172, Ser-198, Asp-314, Asn-337, and Lys-341 each coordinate 3-phosphoshikimate. A phosphoenolpyruvate-binding site is contributed by Gln-172. The Proton acceptor role is filled by Asp-314. Residues Arg-345, Arg-387, and Lys-412 each contribute to the phosphoenolpyruvate site.

It belongs to the EPSP synthase family. In terms of assembly, monomer.

Its subcellular location is the cytoplasm. It carries out the reaction 3-phosphoshikimate + phosphoenolpyruvate = 5-O-(1-carboxyvinyl)-3-phosphoshikimate + phosphate. It participates in metabolic intermediate biosynthesis; chorismate biosynthesis; chorismate from D-erythrose 4-phosphate and phosphoenolpyruvate: step 6/7. Functionally, catalyzes the transfer of the enolpyruvyl moiety of phosphoenolpyruvate (PEP) to the 5-hydroxyl of shikimate-3-phosphate (S3P) to produce enolpyruvyl shikimate-3-phosphate and inorganic phosphate. This chain is 3-phosphoshikimate 1-carboxyvinyltransferase, found in Vibrio vulnificus (strain YJ016).